Reading from the N-terminus, the 460-residue chain is Ammonium transporter Rh type C (460 aa).

Topologically, residues 1-9 are cytoplasmic; it reads MIWNTNLRW. The chain crosses the membrane as a helical span at residues 10 to 30; it reads RLPVACLLLEVALIALFGVFV. The Extracellular segment spans residues 31–61; the sequence is RYDMDADPHWVQEKVIKNLSTDLENEFYYRY. A glycan (N-linked (GlcNAc...) asparagine) is linked at asparagine 48. A helical transmembrane segment spans residues 62 to 82; sequence PSFQDVHVMIFVGFGFLMTFL. Residues 83–89 lie on the Cytoplasmic side of the membrane; sequence QRYGYSS. Residues 90–110 traverse the membrane as a helical segment; the sequence is VGFNFLLAAFGIQWALLMQGW. The Extracellular segment spans residues 111–125; that stretch reads LQSFDGRYILVDLEN. A helical membrane pass occupies residues 126–145; sequence LINADFCVGSVCVAFGAVLG. At 146 to 151 the chain is on the cytoplasmic side; that stretch reads KVSPVQ. Residues 152-174 traverse the membrane as a helical segment; sequence LLIMTLFQVTLFSINEYILLNLL. Over 175 to 179 the chain is Extracellular; that stretch reads EVKDS. A helical transmembrane segment spans residues 180–200; sequence GGSMTIHAFGAYFGLTVAWIL. The Cytoplasmic portion of the chain corresponds to 201 to 219; it reads YRPNLHLSKERQSSTYHSD. A helical membrane pass occupies residues 220 to 240; the sequence is LFAMIGTLFLWMYWPSFNSAI. Over 241–251 the chain is Extracellular; sequence SNHGDAQHRAA. Residues 252–272 form a helical membrane-spanning segment; it reads INTYCSLAACVLTSVALSSAL. Residues 273–285 are Cytoplasmic-facing; sequence HRKGKLDMVHIQN. The helical transmembrane segment at 286–303 threads the bilayer; it reads ATLAGGVGLGTVAELMVL. Topologically, residues 304-306 are extracellular; sequence PFG. Residues 307-329 form a helical membrane-spanning segment; sequence SLIIGFVCGIVSTLGFVYLTPFL. Residues 330–346 lie on the Cytoplasmic side of the membrane; sequence ESRLHIQDTCGVHNLHG. The chain crosses the membrane as a helical span at residues 347–367; it reads IPGIIGGIAGAVTASIANIDL. Topologically, residues 368–396 are extracellular; the sequence is YGEEGLAYAFGIERSKLNWSPNMQGRFQA. Residues 397–417 form a helical membrane-spanning segment; sequence AGLFVSLAMALVGGVIVGVIL. The Cytoplasmic portion of the chain corresponds to 418-460; it reads RLPFWGQAPDENCFEDAVYWEIPKEPKSTALRSEDSSIKPPEP.

The protein belongs to the ammonium transporter (TC 2.A.49) family. Rh subfamily. As to quaternary structure, homotrimer. Post-translationally, N-glycosylated.

Its subcellular location is the apical cell membrane. It catalyses the reaction NH4(+)(in) = NH4(+)(out). The enzyme catalyses methylamine(out) = methylamine(in). The catalysed reaction is CO2(out) = CO2(in). Functionally, ammonium transporter involved in the maintenance of acid-base homeostasis. Transports ammonium and its related derivative methylammonium across the plasma membrane of epithelial cells likely contributing to renal transepithelial ammonia transport and ammonia metabolism. Postulated to primarily mediate an electroneutral bidirectional transport of NH3 ammonia species according to a mechanism that implies interaction of an NH4(+) ion with acidic residues of the pore entry followed by dissociation of NH4(+) into NH3 and H(+). As a result NH3 transits through the central pore and is protonated on the extracellular side reforming NH4(+). May act as a CO2 channel providing for renal acid secretion. In Bos taurus (Bovine), this protein is Ammonium transporter Rh type C (RHCG).